The primary structure comprises 243 residues: 4-hydroxy-tetrahydrodipicolinate reductase (243 aa).

Residues 9-14 (GANGKM), 78-80 (GTS), and 104-107 (APNF) each bind NAD(+). H134 functions as the Proton donor/acceptor in the catalytic mechanism. H135 provides a ligand contact to (S)-2,3,4,5-tetrahydrodipicolinate. K138 (proton donor) is an active-site residue. 144–145 (GT) contributes to the (S)-2,3,4,5-tetrahydrodipicolinate binding site.

It belongs to the DapB family.

The protein resides in the cytoplasm. It catalyses the reaction (S)-2,3,4,5-tetrahydrodipicolinate + NAD(+) + H2O = (2S,4S)-4-hydroxy-2,3,4,5-tetrahydrodipicolinate + NADH + H(+). It carries out the reaction (S)-2,3,4,5-tetrahydrodipicolinate + NADP(+) + H2O = (2S,4S)-4-hydroxy-2,3,4,5-tetrahydrodipicolinate + NADPH + H(+). Its pathway is amino-acid biosynthesis; L-lysine biosynthesis via DAP pathway; (S)-tetrahydrodipicolinate from L-aspartate: step 4/4. Functionally, catalyzes the conversion of 4-hydroxy-tetrahydrodipicolinate (HTPA) to tetrahydrodipicolinate. In Legionella pneumophila (strain Lens), this protein is 4-hydroxy-tetrahydrodipicolinate reductase.